The primary structure comprises 617 residues: Chaperone protein HscA homolog (617 aa).

It belongs to the heat shock protein 70 family.

In terms of biological role, probable chaperone. Has a low intrinsic ATPase activity which is markedly stimulated by HscB. This Vibrio parahaemolyticus serotype O3:K6 (strain RIMD 2210633) protein is Chaperone protein HscA homolog.